The sequence spans 322 residues: Probable heme-iron transport system permease protein IsdF (322 aa).

9 helical membrane passes run 9–29, 61–81, 89–109, 114–134, 143–163, 179–199, 233–253, 267–287, and 294–314; these read LLFL…FVTG, ILIA…LQAA, ANII…MLFI, FYLP…IIVL, VSMI…LEIL, IWSD…LTLL, VFLA…GIIV, VLIP…DLLG, and LEIP…IYLI.

Belongs to the binding-protein-dependent transport system permease family. FecCD subfamily.

It is found in the cell membrane. Its function is as follows. Part of the binding-protein-dependent transport system for heme-iron. Responsible for the translocation of the substrate across the membrane. The sequence is that of Probable heme-iron transport system permease protein IsdF (isdF) from Staphylococcus aureus (strain bovine RF122 / ET3-1).